Reading from the N-terminus, the 164-residue chain is MSTTSAQATAVVTGSFLSGAMISLSLMAVPVLLDTTTEPTQLFFQWRRMYHYGHQVLPTMAVATTLLYAYTASKRRRAQKPSWAVFALAGTITVSMIPFTWLCMVPTNNVLFGLEAATRLGEPSGMGIEEAQALLVKWSWLHFTRSLMPLMGAILGSLGETVWN.

Helical transmembrane passes span Val-11–Val-31, Arg-48–Tyr-70, and Val-85–Val-105.

This sequence belongs to the anthrone oxygenase family.

The protein resides in the membrane. It carries out the reaction emodin anthrone + O2 = emodin + H2O + H(+). It functions in the pathway secondary metabolite biosynthesis. In terms of biological role, anthrone oxygenase; part of the gene cluster that mediates the biosynthesis of agnestins, dihydroxy-xanthone metabolites. The pathway begins with the assembly and cyclization of atrochrysone thioester by the non-reducing polyketide synthase Agnpks1. The atrochrysone carboxyl ACP thioesterase AgnL7 then breaks the thioester bond and releases the atrochrysone carboxylic acid as the first enzyme-free intermediate. The decarboxylase AgnL1 then catalyzes the concerted decarboxylation-elimination required to convert atochrysone carboxylic acid into emodin anthrone, which is further oxidized to emodin by the anthrone oxygenase AgnL2. Emodin then undergoes reduction catalyzed by the oxidoreductase AgnL4 to yield the dihydroquinone tautomer which is the substrate for reduction by the short chain dehydrogenase AgnL6 reduction to produce hydroxyketone, followed by AgnL8 dehydration and likely spontaneous autoxidation to chrysophanol. Baeyer-Villiger oxidation by the oxidase AgnL3 leads to monodictyphenone via cleavage of the C-10/C-10a bond of chrysophanol. Alternative cleavage at the C-4a/C-10 bond of chrysophanol also leads to the formation some cephalone F. Further conversion to agnestins A and B, requires reduction to dihydro-monodictyphenone, oxidation to agnestin C probably via an epoxide, and rearrangement to either agnestin A or agnestin B directly, although agnestin A or agnestin B can also interconvert. Within the cluster, AgnR1 is the only unassigned oxidoreductase present which could be involved in this conversion. However, AgnR1 seems not to be involved in this step, and thus genes involved in the proposed oxidation/reduction may be located elsewhere on the genome. Further agnestin A derivatives are probably formed by spontaneous decarboxylations, dehydrations and methanolysis reactions. This is Anthrone oxygenase AgnL2 from Paecilomyces divaricatus (Penicillium divaricatum).